A 296-amino-acid chain; its full sequence is Putative ribose uptake protein RbsU (296 aa).

9 consecutive transmembrane segments (helical) span residues 2–24 (NGIA…TIAS), 34–51 (IIGT…YNLV), 58–80 (SGAA…ILTF), 90–112 (RAMP…FALG), 121–139 (LVGF…MTTW), 182–201 (AFLP…AVYL), 221–240 (IISG…SAQP), 245–267 (LATG…IWFL), and 276–295 (MVVT…MTVI).

This sequence belongs to the GRP transporter (TC 2.A.7.5) family.

It localises to the cell membrane. In terms of biological role, could be involved in the uptake of ribose. The protein is Putative ribose uptake protein RbsU (rbsU) of Lactobacillus johnsonii (strain CNCM I-12250 / La1 / NCC 533).